Reading from the N-terminus, the 450-residue chain is Phosphoglucosamine mutase (450 aa).

Catalysis depends on Ser-101, which acts as the Phosphoserine intermediate. Mg(2+) contacts are provided by Ser-101, Asp-242, Asp-244, and Asp-246. At Ser-101 the chain carries Phosphoserine.

The protein belongs to the phosphohexose mutase family. It depends on Mg(2+) as a cofactor. Activated by phosphorylation.

It catalyses the reaction alpha-D-glucosamine 1-phosphate = D-glucosamine 6-phosphate. Its function is as follows. Catalyzes the conversion of glucosamine-6-phosphate to glucosamine-1-phosphate. This chain is Phosphoglucosamine mutase, found in Rhodopseudomonas palustris (strain ATCC BAA-98 / CGA009).